An 843-amino-acid chain; its full sequence is Urease (843 aa).

The 444-residue stretch at 400–843 folds into the Urease domain; sequence GGIDCHVHFI…VPLSRNYFLF (444 aa). Histidine 405, histidine 407, and lysine 488 together coordinate Ni(2+). An N6-carboxylysine modification is found at lysine 488. Histidine 490 contributes to the substrate binding site. Ni(2+) is bound by residues histidine 517 and histidine 543. The active-site Proton donor is the histidine 591. Aspartate 631 lines the Ni(2+) pocket.

It in the C-terminal section; belongs to the metallo-dependent hydrolases superfamily. Urease alpha subunit family. As to quaternary structure, homohexamer. Other oligomeric forms may exist depending on pH and presence of salts. The cofactor is Ni(2+). Carboxylation allows a single lysine to coordinate two nickel ions.

The enzyme catalyses urea + 2 H2O + H(+) = hydrogencarbonate + 2 NH4(+). Its pathway is nitrogen metabolism; urea degradation; CO(2) and NH(3) from urea (urease route): step 1/1. Its function is as follows. Urea hydrolase involved in nitrogen recycling from ureide, purine, and arginine catabolism. The sequence is that of Urease from Oryza sativa subsp. indica (Rice).